Reading from the N-terminus, the 2493-residue chain is Polyprotein P1234 (2493 aa).

The region spanning 28 to 259 is the Alphavirus-like MT domain; that stretch reads EAKQVTDNDH…EKRDLLRSWH (232 aa). A nsP1 membrane-binding region spans residues 244–263; it reads GSTIYHEKRDLLRSWHLPSV. Cys419 is lipidated: S-palmitoyl cysteine; by host. Positions 690–841 constitute a (+)RNA virus helicase ATP-binding domain; that stretch reads ELVDPPFHEF…HEICTQVFHK (152 aa). 721 to 728 is a binding site for a ribonucleoside 5'-triphosphate; that stretch reads GVPGSGKS. In terms of domain architecture, (+)RNA virus helicase C-terminal spans 842–990; sequence SISRRCTKSV…IEEWQAEHDA (149 aa). Residues 1003 to 1322 form the Peptidase C9 domain; the sequence is DVFQNKANVC…STLTNIYTGS (320 aa). A nucleolus localization signal region spans residues 1004–1023; it reads VFQNKANVCWAKALVPVLKT. The active-site For cysteine protease nsP2 activity is Cys1012. Positions 1056-1065 match the Nuclear export signal motif; the sequence is VRFFGLDLDS. His1081 acts as the For cysteine protease nsP2 activity in catalysis. Positions 1179–1183 match the Nuclear localization signal motif; sequence PGKKV. Residues 1330–1489 form the Macro domain; sequence APSYHVVRGD…TLKEAVARRE (160 aa). ADP-D-ribose-binding residues include Asp1339, Asn1353, Gly1361, Gly1441, Ile1442, and Phe1443. Residues Cys1596, Cys1598, Cys1621, and Cys1639 each contribute to the Zn(2+) site. 2 disordered regions span residues 1664-1684 and 1790-1826; these read PVEE…TPEQ and APRT…STPP. A compositionally biased stretch (polar residues) spans 1814–1823; sequence RASSRTSLVS. 2 repeat units span residues 1818-1839 and 1852-1873. Residues 1818–1873 form a 2 X 21 AA approximate repeats, binding to host FXR family members region; it reads RTSLVSTPPGVNRVITREELEALTPSRAPSRSASRTSLVSNPPGVNRVITREEFEA. One can recognise a RdRp catalytic domain in the interval 2250–2365; that stretch reads DCVLETDIAS…KGVKSDKLMA (116 aa).

As to quaternary structure, interacts with non-structural protein 3. Interacts with RNA-directed RNA polymerase nsP4. Interacts with protease nsP2. interacts with itself. In terms of assembly, interacts with mRNA-capping enzyme nsP1. Interacts with host DDX1. Interacts with host DDX3. Interacts (via C-terminus) with host FXR1; this interaction inhibits the formation of host stress granules on viral mRNAs and the nsp3-FXR1 complexes bind viral RNAs and probably orchestrate the assembly of viral replication complexes. Interacts (via C-terminus) with host FXR2; this interaction inhibits the formation of host stress granules on viral mRNAs and the nsp3-FXR2 complexes bind viral RNAs and probably orchestrate the assembly of viral replication complexes. Interacts (via C-terminus) with host FMR1; this interaction inhibits the formation of host stress granules on viral mRNAs and the nsp3-FMR1 complexes bind viral RNAs and probably orchestrate the assembly of viral replication complexes. Interacts with mRNA-capping enzyme nsP1. Interacts with protease nsP2. interacts with itself. As to quaternary structure, interacts with RNA-directed RNA polymerase nsP4. Interacts with mRNA-capping enzyme nsP1. Interacts with KPNA1/karyopherin-alpha1; this interaction probably allows the active transport of protease nsP2 into the host nucleus. Mg(2+) is required as a cofactor. Mn(2+) serves as cofactor. Specific enzymatic cleavages in vivo yield mature proteins. The processing of the polyprotein is temporally regulated. In early stages (1.7 hpi), P1234 is first cleaved in trans through its nsP2 protease activity, releasing P123' and nsP4, which associate to form the early replication complex. At the same time, P1234 is also cut at the nsP1/nsP2 site early in infection but with lower efficiency. After replication of the viral minus-strand RNAs (4 hpi), the polyproteins are cut at the nsP1/nsP2 and nsP2/nsP3 sites very efficiently, preventing accumulation of P123' and P1234 and allowing the formation of the late replication complex. NsP3'/nsP4 site is not cleaved anymore and P34 is produced rather than nsP4. In terms of processing, specific enzymatic cleavages in vivo yield mature proteins. The processing of the polyprotein is temporally regulated. In early stages (1.7 hpi), P123 is cleaved at the nsP1/nsP2 site with low efficiency. After replication of the viral minus-strand RNAs (4 hpi), the polyproteins are cut at the nsP1/nsP2 and nsP2/nsP3 sites very efficiently, preventing accumulation of P123 and allowing the formation of the late replication complex. Post-translationally, specific enzymatic cleavages in vivo yield mature proteins. The processing of the polyprotein is temporally regulated. In early stages (1.7 hpi), P123' is cleaved at the nsP1/nsP2 site with low efficiency. After replication of the viral minus-strand RNAs (4 hpi), the polyproteins are cut at the nsP1/nsP2 and nsP2/nsP3 sites very efficiently, preventing accumulation of P123' and allowing the formation of the late replication complex. Palmitoylated by host palmitoyltransferases ZDHHC2 and ZDHHC19. In terms of processing, phosphorylated by host on serines and threonines. Post-translationally, ubiquitinated; targets the protein for rapid degradation via the ubiquitin system. Nsp4 is present in extremely low quantities due to low frequency of translation through the amber stop-codon and the degradation by the ubiquitin pathway.

Its subcellular location is the host cytoplasmic vesicle membrane. The protein localises to the host cell membrane. It is found in the host cell projection. It localises to the host filopodium. The protein resides in the host nucleus. Its subcellular location is the host cytoplasm. The catalysed reaction is GTP + S-adenosyl-L-methionine = N(7)-methyl-GTP + S-adenosyl-L-homocysteine. The enzyme catalyses N(7)-methyl-GTP + L-histidyl-[protein] = N(tele)-(N(7)-methylguanosine 5'-phospho)-L-histidyl-[protein] + diphosphate. It carries out the reaction N(tele)-(N(7)-methylguanosine 5'-phospho)-L-histidyl-[protein] + a 5'-end diphospho-(purine-ribonucleoside) in mRNA + H(+) = a 5'-end (N(7)-methyl 5'-triphosphoguanosine)-(purine-ribonucleoside) in mRNA + L-histidyl-[protein]. It catalyses the reaction a 5'-end triphospho-ribonucleoside in mRNA + H2O = a 5'-end diphospho-ribonucleoside in mRNA + phosphate + H(+). The catalysed reaction is a ribonucleoside 5'-triphosphate + H2O = a ribonucleoside 5'-diphosphate + phosphate + H(+). The enzyme catalyses ATP + H2O = ADP + phosphate + H(+). It carries out the reaction RNA(n) + a ribonucleoside 5'-triphosphate = RNA(n+1) + diphosphate. It catalyses the reaction 4-O-(ADP-D-ribosyl)-L-aspartyl-[protein] + H2O = L-aspartyl-[protein] + ADP-D-ribose + H(+). The catalysed reaction is 5-O-(ADP-D-ribosyl)-L-glutamyl-[protein] + H2O = L-glutamyl-[protein] + ADP-D-ribose + H(+). The enzyme catalyses RNA(n) + ATP = RNA(n)-3'-adenine ribonucleotide + diphosphate. It carries out the reaction ADP-alpha-D-ribose 1''-phosphate + H2O = ADP-D-ribose + phosphate. Inhibited by sinefungin. In terms of biological role, inactive precursor of the viral replicase, which is activated by cleavages carried out by the viral protease nsP2. Its function is as follows. The early replication complex formed by the polyprotein P123 and nsP4 synthesizes the minus-strand RNAs (antigenome). Polyprotein P123 is a short-lived polyprotein that accumulates during early stage of infection. As soon P123 is cleaved into mature proteins, the plus-strand RNAs synthesis begins. The early replication complex formed by the polyprotein P123' and nsP4 synthesizes minus-strand RNAs (antigenome). Polyprotein P123' is a short-lived polyprotein that accumulates during early stage of infection. As soon P123' is cleaved into mature proteins, the plus-strand RNAs synthesis begins. Functionally, cytoplasmic capping enzyme that catalyzes two virus-specific reactions: methyltransferase and nsP1 guanylyltransferase. mRNA-capping is necessary since all viral RNAs are synthesized in the cytoplasm, and host capping enzymes are restricted to the nucleus. The enzymatic reaction involves a covalent link between 7-methyl-GMP and nsP1, whereas eukaryotic capping enzymes form a covalent complex only with GMP. NsP1 capping consists in the following reactions: GTP is first methylated into 7-methyl-GMP and then is covalently linked to nsP1 to form the m7GMp-nsP1 complex from which 7-methyl-GMP complex is transferred to the mRNA to create the cap structure. NsP1 is also needed for the initiation of the minus-strand RNAs synthesis. Probably serves as a membrane anchor for the replication complex composed of nsP1-nsP4. Nsp1 is needed for the initiation of the minus-strand RNAs synthesis. Palmitoylated nsP1 is remodeling host cell cytoskeleton, and induces filopodium-like structure formation at the surface of the host cell. In terms of biological role, multifunctional protein whose N-terminus is part of the RNA polymerase complex and displays NTPase, RNA triphosphatase and helicase activities. NTPase and RNA triphosphatase are involved in viral RNA capping and helicase keeps a check on the dsRNA replication intermediates. The C-terminus harbors a protease that specifically cleaves the polyproteins and releases the mature proteins. Required for the shutoff of minus-strand RNAs synthesis. Inhibits host translation to ensure maximal viral gene expression and evade host immune response. Its function is as follows. Seems to be essential for minus-strand RNAs and subgenomic 26S mRNAs synthesis. Displays mono-ADP-ribosylhydrolase activity. ADP-ribosylation is a post-translational modification that controls various processes of the host cell and the virus probably needs to revert it for optimal viral replication. Binds proteins of FXR family and sequesters them into the viral RNA replication complexes thereby inhibiting the formation of host stress granules on viral mRNAs. The nsp3-FXR complexes bind viral RNAs and probably orchestrate the assembly of viral replication complexes, thanks to the ability of FXR family members to self-assemble and bind DNA. Seems to be essential for minus-strand RNAs and subgenomic 26S mRNAs synthesis. Displays mono-ADP-ribosylhydrolase activity. ADP-ribosylation is a post-translational modification that controls various processes of the host cell and the virus probably needs to revert it for optimal viral replication. Binds proteins of FXR family and sequesters them into the viral RNA replication complexes thereby inhibiting the formation of host stress granules on viral mRNAs. The nsp3'-FXR complexes bind viral RNAs and probably orchestrate the assembly of viral replication complexes, thanks to the ability of FXR family members to self-assemble and bind DNA. Functionally, RNA dependent RNA polymerase. Replicates genomic and antigenomic RNA by recognizing replications specific signals. The early replication complex formed by the polyprotein P123 and nsP4 synthesizes minus-strand RNAs. The late replication complex composed of fully processed nsP1-nsP4 is responsible for the production of genomic and subgenomic plus-strand RNAs. The protein is Polyprotein P1234 of Bos taurus (Bovine).